We begin with the raw amino-acid sequence, 152 residues long: Large ribosomal subunit protein bL9 (152 aa).

Belongs to the bacterial ribosomal protein bL9 family.

Its function is as follows. Binds to the 23S rRNA. The sequence is that of Large ribosomal subunit protein bL9 from Mycobacterium bovis (strain ATCC BAA-935 / AF2122/97).